The primary structure comprises 276 residues: ATP synthase subunit a (276 aa).

Helical transmembrane passes span 27-47, 61-81, 120-140, 159-179, 225-245, and 246-266; these read ITML…LEVG, GQTF…SLAA, LPFI…GALL, DINT…YAGL, LVVA…LMAL, and GLFT…AYIH.

This sequence belongs to the ATPase A chain family. In terms of assembly, F-type ATPases have 2 components, CF(1) - the catalytic core - and CF(0) - the membrane proton channel. CF(1) has five subunits: alpha(3), beta(3), gamma(1), delta(1), epsilon(1). CF(0) has four main subunits: a, b, b' and c.

The protein localises to the cellular thylakoid membrane. Functionally, key component of the proton channel; it plays a direct role in the translocation of protons across the membrane. The protein is ATP synthase subunit a of Synechocystis sp. (strain ATCC 27184 / PCC 6803 / Kazusa).